The chain runs to 425 residues: Palmitoyltransferase ZDHHC23 (425 aa).

At 1-81 the chain is on the cytoplasmic side; sequence MKPVKKKKTE…RIPWLRGAKK (81 aa). Residues 82 to 99 form a helical membrane-spanning segment; it reads VNISIVPPLVLLPVFLHV. At 100 to 102 the chain is on the lumenal side; it reads ASW. The helical transmembrane segment at 103–125 threads the bilayer; it reads HFLLGVVVLTSLPMLALWYYYLT. Residues 126-130 lie on the Cytoplasmic side of the membrane; sequence HRRKE. Residues 131–151 traverse the membrane as a helical segment; sequence QTLFFLSLGLFSLGYMYYVFL. The Lumenal portion of the chain corresponds to 152-159; sequence REVVPQGR. Residues 160 to 180 form a helical membrane-spanning segment; that stretch reads VGPTQLALLTCGLLLILLALY. Residues 181 to 292 lie on the Cytoplasmic side of the membrane; that stretch reads RAKKNPGYLS…NSCVGESNHQ (112 aa). Positions 249-299 constitute a DHHC domain; sequence DWCAKCQLVRPARAWHCRICGICVRRMDHHCVWINSCVGESNHQAFILALS. The S-palmitoyl cysteine intermediate role is filled by Cys-279. A helical transmembrane segment spans residues 293-313; it reads AFILALSIFLLTSVYGISLTL. Topologically, residues 314-343 are lumenal; sequence NTICRDRSLFTALFYCPGVYANYSSALSFT. A helical membrane pass occupies residues 344–364; it reads CVWYSVIITAGMAYIFLIQLI. Topologically, residues 365–425 are cytoplasmic; the sequence is NISYNVTERE…TVHTPAEDIV (61 aa). An interaction with NOS1 region spans residues 422 to 425; it reads EDIV.

It belongs to the DHHC palmitoyltransferase family. In terms of assembly, interacts with NOS1. As to expression, expressed in the brain.

It localises to the golgi apparatus membrane. The protein localises to the golgi apparatus. It is found in the trans-Golgi network membrane. It catalyses the reaction L-cysteinyl-[protein] + hexadecanoyl-CoA = S-hexadecanoyl-L-cysteinyl-[protein] + CoA. Functionally, palmitoyltransferase that could catalyze the addition of palmitate onto various protein substrates and be involved in a variety of cellular processes. Palmitoyltransferase that mediates palmitoylation of KCNMA1, regulating localization of KCNMA1 to the plasma membrane. May be involved in NOS1 regulation and targeting to the synaptic membrane. The polypeptide is Palmitoyltransferase ZDHHC23 (Mus musculus (Mouse)).